Here is a 375-residue protein sequence, read N- to C-terminus: Ornithine carbamoyltransferase, chloroplastic (375 aa).

Residues 123–126, Arg-174, His-201, and Gln-204 contribute to the carbamoyl phosphate site; that span reads SMRT. The L-ornithine site is built by Asn-232, Asp-293, Ser-297, and Met-298. The Proton acceptor role is filled by Cys-333. Carbamoyl phosphate-binding positions include 333-334 and Arg-361; that span reads CL.

The protein belongs to the aspartate/ornithine carbamoyltransferase superfamily. OTCase family. Homotrimer.

It is found in the plastid. It localises to the chloroplast. The catalysed reaction is carbamoyl phosphate + L-ornithine = L-citrulline + phosphate + H(+). The sequence is that of Ornithine carbamoyltransferase, chloroplastic (ARGF) from Pisum sativum (Garden pea).